The primary structure comprises 421 residues: MQDSIEQYMQKVGQQARDASRVLTSASTSLKNHALSAIYTALENNQAAILAANQIDMEKGRSNQLDSALLDRLELTPARFKGMLQGLKDVIALVDPIGEITDLAYRPTGIQIGKMRVPLGVVGMIYESRPNVTLEAASLAIKSGNAIILRGGSEALESNKAIAEAVKHGLKVAGLPEHSVQVIETSDRAAVGHLITMAEYVDVIVPRGGKSLIERVTNEARIPVIKHLDGNCHVFVEAQADLQKALPITLNAKTHRYGVCNAMETLLVDEKIAEVFLPHIAELYAEKQVELRGCPETHRILGTTVKPATEEDWYTEYLGPILAVKVVSGIDEAIDHINKYGSHHTDAIVTENYTLARQFLARVDSSSVVVNASTRFADGFEYGLGAEIGISTDKIHARGPVGLEGLTSQKWIVLGDGQIRQ.

It belongs to the gamma-glutamyl phosphate reductase family.

Its subcellular location is the cytoplasm. It carries out the reaction L-glutamate 5-semialdehyde + phosphate + NADP(+) = L-glutamyl 5-phosphate + NADPH + H(+). It functions in the pathway amino-acid biosynthesis; L-proline biosynthesis; L-glutamate 5-semialdehyde from L-glutamate: step 2/2. In terms of biological role, catalyzes the NADPH-dependent reduction of L-glutamate 5-phosphate into L-glutamate 5-semialdehyde and phosphate. The product spontaneously undergoes cyclization to form 1-pyrroline-5-carboxylate. The sequence is that of Gamma-glutamyl phosphate reductase from Acinetobacter baumannii (strain SDF).